A 297-amino-acid chain; its full sequence is Endonuclease G, mitochondrial (297 aa).

The N-terminal 48 residues, 1 to 48 (MRALRAGLTLASGAGLGAVVEGWRRRREDARAAPGLLGRLPVLPVAAA), are a transit peptide targeting the mitochondrion. Position 128 is a phosphothreonine; by GSK3-beta (threonine 128). Histidine 141 functions as the Proton acceptor in the catalytic mechanism. Asparagine 172 is a Mg(2+) binding site. The interval 286-296 (AGSLKAITAGS) is essential for deoxyribonuclease activity. Serine 288 carries the phosphoserine; by GSK3-beta modification.

This sequence belongs to the DNA/RNA non-specific endonuclease family. As to quaternary structure, homodimer; disulfide-linked. Homodimerization is essential for enzyme activity. Interacts with YWHAG. The cofactor is Mg(2+). In terms of processing, GSK3-beta-mediated dual phosphorylations at Thr-128 and Ser-288 is necessary for its interaction with YWHAG and the induction of autophagy.

The protein resides in the mitochondrion. Functionally, endonuclease that preferentially catalyzes the cleavage of double-stranded 5-hydroxymethylcytosine (5hmC)-modified DNA. The 5hmC-modified nucleotide does not increase the binding affinity, but instead increases the efficiency of cutting and specifies the site of cleavage for the modified DNAs. Shows significantly higher affinity for four-stranded Holliday junction over duplex and single-stranded DNAs. Promotes conservative recombination when the DNA is 5hmC-modified. Promotes autophagy through the suppression of mTOR by its phosphorylation-mediated interaction with YWHAG and its endonuclease activity-mediated DNA damage response. GSK3-beta mediated phosphorylation of ENDOG enhances its interaction with YWHAG, leading to the release of TSC2 and PIK3C3 from YWHAG resulting in mTOR pathway suppression and autophagy initiation. Promotes cleavage of mtDNA in response to oxidative and nitrosative stress, in turn inducing compensatory mtDNA replication. In Homo sapiens (Human), this protein is Endonuclease G, mitochondrial (ENDOG).